We begin with the raw amino-acid sequence, 177 residues long: Large ribosomal subunit protein uL6 (177 aa).

This sequence belongs to the universal ribosomal protein uL6 family. As to quaternary structure, part of the 50S ribosomal subunit.

This protein binds to the 23S rRNA, and is important in its secondary structure. It is located near the subunit interface in the base of the L7/L12 stalk, and near the tRNA binding site of the peptidyltransferase center. In Klebsiella pneumoniae subsp. pneumoniae (strain ATCC 700721 / MGH 78578), this protein is Large ribosomal subunit protein uL6.